Consider the following 2768-residue polypeptide: Thyroglobulin (2768 aa).

The first 19 residues, 1-19, serve as a signal peptide directing secretion; sequence MALVLEIFTLLASICWVSA. Residue Tyr-24 is modified to Iodotyrosine; alternate. Sulfotyrosine; alternate is present on Tyr-24. Tyr-24 carries the post-translational modification Thyroxine; alternate. Triiodothyronine; alternate is present on Tyr-24. Thyroglobulin type-1 domains are found at residues 31–92, 93–160, 161–297, and 298–358; these read LRPC…PVAC, LSFC…PKRC, PRSC…RFRC, and PTKC…PPSC. Cystine bridges form between Cys-34–Cys-52, Cys-63–Cys-70, Cys-72–Cys-92, Cys-96–Cys-120, Cys-131–Cys-138, Cys-140–Cys-160, Cys-164–Cys-183, Cys-194–Cys-235, Cys-237–Cys-297, Cys-301–Cys-319, Cys-330–Cys-336, Cys-338–Cys-358, Cys-364–Cys-620, Cys-408–Cys-608, Cys-631–Cys-636, Cys-638–Cys-658, Cys-662–Cys-687, and Cys-698–Cys-703. Asn-76 carries N-linked (GlcNAc...) asparagine glycosylation. Tyr-108 carries the post-translational modification Iodotyrosine. Asn-110 carries an N-linked (GlcNAc...) asparagine glycan. Tyr-149 carries the post-translational modification Iodotyrosine; alternate. A Diiodotyrosine; alternate modification is found at Tyr-149. Asn-198 is a glycosylation site (N-linked (GlcNAc...) asparagine). Iodotyrosine is present on residues Tyr-234 and Tyr-258. N-linked (GlcNAc...) asparagine glycans are attached at residues Asn-484 and Asn-529. Residues 521-545 are disordered; sequence PLSVGLDSNSSTGTPEAAKKDGTMN. Thyroglobulin type-1 domains lie at 605-658, 659-726, 727-921, 922-1073, 1074-1145, and 1146-1210; these read SQTC…QPRC, PTDC…PKKC, PTPC…LPTC, PGSC…IPQC, PTTC…SAQC, and PSLC…QPAC. Tyr-704 bears the Iodotyrosine; alternate mark. Tyr-704 is subject to Thyroxine; alternate. Residue Tyr-704 is modified to Triiodothyronine; alternate. Tyr-704 bears the Diiodotyrosine; alternate mark. Disulfide bonds link Cys-705–Cys-726, Cys-730–Cys-763, Cys-774–Cys-898, Cys-900–Cys-921, Cys-925–Cys-1031, Cys-1042–Cys-1049, Cys-1051–Cys-1073, Cys-1077–Cys-1108, Cys-1126–Cys-1145, Cys-1149–Cys-1169, Cys-1181–Cys-1188, Cys-1190–Cys-1210, Cys-1215–Cys-1264, Cys-1231–Cys-1245, Cys-1306–Cys-1356, and Cys-1331–Cys-1347. The N-linked (GlcNAc...) asparagine glycan is linked to Asn-748. Tyr-785 is subject to Iodotyrosine. A glycan (N-linked (GlcNAc...) asparagine) is linked at Asn-816. Tyr-866 carries the post-translational modification Iodotyrosine; alternate. Position 866 is a diiodotyrosine; alternate (Tyr-866). At Tyr-883 the chain carries Diiodotyrosine. A glycan (N-linked (GlcNAc...) asparagine) is linked at Asn-947. Tyr-992 carries the iodotyrosine; alternate modification. Position 992 is a diiodotyrosine; alternate (Tyr-992). An N-linked (GlcNAc...) asparagine glycan is attached at Asn-1220. Tyr-1310 bears the Iodotyrosine mark. Tyr-1310 is modified (thyroxine). N-linked (GlcNAc...) asparagine glycans are attached at residues Asn-1348, Asn-1349, and Asn-1365. 9 cysteine pairs are disulfide-bonded: Cys-1440–Cys-1459, Cys-1462–Cys-1473, Cys-1476–Cys-1490, Cys-1493–Cys-1510, Cys-1514–Cys-1523, Cys-1543–Cys-1565, Cys-1603–Cys-1627, Cys-1607–Cys-1613, and Cys-1639–Cys-1662. Type II repeat units follow at residues 1456–1469, 1470–1486, and 1487–1503; these read GLGC…SYSQ, DEEC…EQAG, and SLAC…ISAG. An Iodotyrosine; alternate modification is found at Tyr-1467. Diiodotyrosine; alternate is present on Tyr-1467. A Thyroglobulin type-1 11 domain is found at 1511 to 1565; sequence VTDCQRNEAGLQCDQNGQYRASQKDRGSGKAFCVDGEGRRLPWWETEAPLEDSQC. The stretch at 1603 to 1723 is one Type IIIA repeat; the sequence is CLTDCTEDEA…GANLTDAHLF (121 aa). An N-linked (GlcNAc...) asparagine glycan is attached at Asn-1716. 4 disulfide bridges follow: Cys-1724/Cys-1749, Cys-1728/Cys-1734, Cys-1733/Cys-1835, and Cys-1760/Cys-1777. A Type IIIB repeat occupies 1724–1892; that stretch reads CLLACDRDLC…LFSAQQANLW (169 aa). N-linked (GlcNAc...) asparagine glycosylation is found at Asn-1774 and Asn-1869. Disulfide bonds link Cys-1893/Cys-1919, Cys-1897/Cys-1904, Cys-1928/Cys-1939, Cys-1996/Cys-2024, Cys-2000/Cys-2006, Cys-2005/Cys-2076, and Cys-2035/Cys-2048. A Type IIIA repeat occupies 1893–1995; that stretch reads CLSRCVQEHS…EKSISNGFFE (103 aa). A Type IIIB repeat occupies 1996 to 2129; sequence CERRCDADPC…TSNFSAVRDL (134 aa). An N-linked (GlcNAc...) asparagine glycan is attached at Asn-2013. Residue Asn-2122 is glycosylated (N-linked (GlcNAc...) asparagine). 3 cysteine pairs are disulfide-bonded: Cys-2130-Cys-2154, Cys-2134-Cys-2140, and Cys-2163-Cys-2172. A Type IIIA repeat occupies 2130 to 2187; sequence CLSECSQHEACLITTLQTQPGAVRCMFYADTQSCTHSLQGQNCRLLLREEATHIYRKP. Residue Tyr-2184 is modified to Iodotyrosine. Residues 2188–2768 are cholinesterase-like (ChEL); it reads GISLLSYEAS…QEPGSKTYSK (581 aa). Residue Asn-2250 is glycosylated (N-linked (GlcNAc...) asparagine). Cys-2264 and Cys-2281 are oxidised to a cystine. Residue Asn-2295 is glycosylated (N-linked (GlcNAc...) asparagine). Cysteines 2442 and 2453 form a disulfide. Position 2540 is an iodotyrosine (Tyr-2540). At Tyr-2573 the chain carries Iodotyrosine; alternate. Tyr-2573 carries the thyroxine; alternate modification. Tyr-2573 carries the triiodothyronine; alternate modification. Tyr-2573 carries the post-translational modification Diiodotyrosine; alternate. Asn-2582 carries an N-linked (GlcNAc...) asparagine glycan. Iodotyrosine is present on residues Tyr-2587 and Tyr-2617. Cys-2591 and Cys-2715 are disulfide-bonded. Tyr-2697 is subject to Diiodotyrosine. Residues 2727–2768 are disordered; the sequence is TSADGAKGGQSAESEEEELTAGSGLREDLLSLQEPGSKTYSK. Ser-2749 carries O-linked (Xyl...) (chondroitin sulfate) serine glycosylation. Tyr-2766 is modified (iodotyrosine; alternate). Position 2766 is a thyroxine; alternate (Tyr-2766). Residue Tyr-2766 is modified to Triiodothyronine; alternate. A Diiodotyrosine; alternate modification is found at Tyr-2766.

Belongs to the type-B carboxylesterase/lipase family. As to quaternary structure, monomer. Homodimer (via ChEL region); occurs in the endoplasmic reticulum and is required for export to the Golgi apparatus. Homooligomer; disulfide-linked; stored in this form in the thyroid follicle lumen. In terms of processing, iodinated on tyrosine residues by TPO. There are 4 pairs of iodinated tyrosines used for coupling: acceptor Tyr-24 is coupled to donor Tyr-149 or Tyr-234, acceptor Tyr-2573 is coupled to donor Tyr-2540, acceptor Tyr-2766 in monomer 1 is coupled to donor Tyr-2766 in monomer 2 and acceptor Tyr-1310 in monomer 1 is coupled to donor Tyr-108 in monomer 2. Post-translationally, sulfated tyrosines are desulfated during iodination. Undergoes sequential proteolysis by cathepsins to release thyroxine (T4) and triiodothyronine (T3) hormones. In the thyroid follicle lumen, cross-linked TG (storage form) is solubilized by limited proteolysis mediated by cathepsins CTSB and/or CTSL. Partially cleaved TG is further processed by CTSK/cathepsin K and/or CTSL resulting in the release of T4. Following endocytosis, further processing occurs leading to the release of T3 and more T4 hormones. In terms of tissue distribution, specifically expressed in the thyroid gland.

The protein localises to the secreted. Acts as a substrate for the production of iodinated thyroid hormones thyroxine (T4) and triiodothyronine (T3). The synthesis of T3 and T4 involves iodination of selected tyrosine residues of TG/thyroglobulin followed by their oxidative coupling in the thyroid follicle lumen. Following TG re-internalization and lysosomal-mediated proteolysis, T3 and T4 are released from the polypeptide backbone leading to their secretion into the bloodstream. One dimer produces 7 thyroid hormone molecules. The protein is Thyroglobulin of Homo sapiens (Human).